A 258-amino-acid polypeptide reads, in one-letter code: 5'-nucleotidase SurE (258 aa).

A divalent metal cation is bound by residues aspartate 8, aspartate 9, serine 39, and asparagine 95.

It belongs to the SurE nucleotidase family. A divalent metal cation serves as cofactor.

It localises to the cytoplasm. It catalyses the reaction a ribonucleoside 5'-phosphate + H2O = a ribonucleoside + phosphate. Nucleotidase that shows phosphatase activity on nucleoside 5'-monophosphates. In Methanobrevibacter smithii (strain ATCC 35061 / DSM 861 / OCM 144 / PS), this protein is 5'-nucleotidase SurE.